Here is a 115-residue protein sequence, read N- to C-terminus: Parathyroid hormone (115 aa).

A signal peptide spans 1–25 (MMSANTVAKVMIIMLAVCLLTQTDG). Residues 26-31 (KPVRKR) constitute a propeptide that is removed on maturation. Positions 51 to 69 (RMQWLRRKLQDMHNFVSLG) are important for receptor binding.

Belongs to the parathyroid hormone family. As to quaternary structure, interacts with PTH1R (via N-terminal extracellular domain). In terms of tissue distribution, highly expressed in the parathyroid gland. Also expressed in the placenta, thymus and testis.

The protein resides in the secreted. Parathyroid hormone elevates calcium level by dissolving the salts in bone and preventing their renal excretion. Acts by binding to its receptor, PTH1R, activating G protein-coupled receptor signaling. Stimulates [1-14C]-2-deoxy-D-glucose (2DG) transport and glycogen synthesis in osteoblastic cells. This chain is Parathyroid hormone, found in Mus musculus (Mouse).